We begin with the raw amino-acid sequence, 285 residues long: NAD kinase (285 aa).

D66 serves as the catalytic Proton acceptor. NAD(+)-binding positions include 66-67 (DG), 137-138 (ND), R148, R165, D167, and 178-183 (TAYSLS).

Belongs to the NAD kinase family. It depends on a divalent metal cation as a cofactor.

It is found in the cytoplasm. The enzyme catalyses NAD(+) + ATP = ADP + NADP(+) + H(+). In terms of biological role, involved in the regulation of the intracellular balance of NAD and NADP, and is a key enzyme in the biosynthesis of NADP. Catalyzes specifically the phosphorylation on 2'-hydroxyl of the adenosine moiety of NAD to yield NADP. The sequence is that of NAD kinase from Prosthecochloris aestuarii (strain DSM 271 / SK 413).